We begin with the raw amino-acid sequence, 228 residues long: Biopolymer transport protein exbB1 (228 aa).

Transmembrane regions (helical) follow at residues 11-31, 116-136, and 158-178; these read LGLM…LLAE, LTLI…LGLI, and LGVA…AVAG.

This sequence belongs to the ExbB/TolQ family. The accessory proteins ExbB and ExbD seem to form a complex with TonB.

The protein localises to the cell inner membrane. Involved in the TonB-dependent energy-dependent transport of various receptor-bound substrates. Protects ExbD from proteolytic degradation and functionally stabilizes TonB. This is Biopolymer transport protein exbB1 (exbB1) from Vibrio cholerae serotype O1 (strain ATCC 39315 / El Tor Inaba N16961).